A 411-amino-acid polypeptide reads, in one-letter code: LIM domain-binding protein 1 (411 aa).

Disordered regions lie at residues 284-330 (PPAE…TFAL) and 367-411 (DAAN…QASQ). Residues 302 to 318 (SGGSTMSSGGGNTNNSN) are compositionally biased toward low complexity. Residues 336-375 (DVMVVGEPTLMGGEFGDEDERLITRLENTQFDAANGIDDE) enclose the LIM interaction domain (LID) domain.

It belongs to the LDB family. As to quaternary structure, forms homodimers and heterodimers. As to expression, first expressed at stages 15-16 in presumptive limb mesoderm. As limb outgrowth proceeds, expressed in the entire limb bud, concentrating in the distal mesoderm throughout limb development. Both hindlimbs and forelimbs exhibit similar expression patterns.

The protein localises to the nucleus. In terms of biological role, binds to the LIM domain of a wide variety of LIM domain-containing transcription factors. The protein is LIM domain-binding protein 1 of Gallus gallus (Chicken).